The sequence spans 101 residues: Small ribosomal subunit protein uS14 (101 aa).

The protein belongs to the universal ribosomal protein uS14 family. As to quaternary structure, part of the 30S ribosomal subunit. Contacts proteins S3 and S10.

Binds 16S rRNA, required for the assembly of 30S particles and may also be responsible for determining the conformation of the 16S rRNA at the A site. In Shewanella amazonensis (strain ATCC BAA-1098 / SB2B), this protein is Small ribosomal subunit protein uS14.